Consider the following 737-residue polypeptide: 1,4-alpha-glucan branching enzyme GlgB (737 aa).

Asp-419 functions as the Nucleophile in the catalytic mechanism. Glu-472 serves as the catalytic Proton donor.

It belongs to the glycosyl hydrolase 13 family. GlgB subfamily. Monomer.

It catalyses the reaction Transfers a segment of a (1-&gt;4)-alpha-D-glucan chain to a primary hydroxy group in a similar glucan chain.. The protein operates within glycan biosynthesis; glycogen biosynthesis. Functionally, catalyzes the formation of the alpha-1,6-glucosidic linkages in glycogen by scission of a 1,4-alpha-linked oligosaccharide from growing alpha-1,4-glucan chains and the subsequent attachment of the oligosaccharide to the alpha-1,6 position. The chain is 1,4-alpha-glucan branching enzyme GlgB from Cellvibrio japonicus (strain Ueda107) (Pseudomonas fluorescens subsp. cellulosa).